The following is a 411-amino-acid chain: Bifunctional protein GlmU (411 aa).

A pyrophosphorylase region spans residues 1–204 (MDAIILCAGK…NGKLHGIELN (204 aa)). Residues 6–9 (LCAG), Gln74, and Gly79 contribute to the UTP site. Thr80, Gly130, Asn142, and Asn158 together coordinate N-acetyl-alpha-D-glucosamine 1-phosphate. Positions 205-224 (GYWNDIGHPWDVLSANNRFL) are linker. Residues 225 to 411 (NKIISKVSGK…DELVITKKRN (187 aa)) are N-acetyltransferase. Catalysis depends on His308, which acts as the Proton acceptor. Residues Ala384 and Lys401 each coordinate acetyl-CoA.

The protein in the N-terminal section; belongs to the N-acetylglucosamine-1-phosphate uridyltransferase family. This sequence in the C-terminal section; belongs to the transferase hexapeptide repeat family.

It catalyses the reaction N-acetyl-alpha-D-glucosamine 1-phosphate + UTP + H(+) = UDP-N-acetyl-alpha-D-glucosamine + diphosphate. The enzyme catalyses alpha-D-glucosamine 1-phosphate + acetyl-CoA = N-acetyl-alpha-D-glucosamine 1-phosphate + CoA + H(+). It participates in nucleotide-sugar biosynthesis; UDP-N-acetyl-alpha-D-glucosamine biosynthesis; N-acetyl-alpha-D-glucosamine 1-phosphate from alpha-D-glucosamine 6-phosphate (route II): step 2/2. The protein operates within nucleotide-sugar biosynthesis; UDP-N-acetyl-alpha-D-glucosamine biosynthesis; UDP-N-acetyl-alpha-D-glucosamine from N-acetyl-alpha-D-glucosamine 1-phosphate: step 1/1. Functionally, catalyzes the last two sequential reactions in the de novo biosynthetic pathway for UDP-N-acetyl-glucosamine (UDP-GlcNAc). Responsible for the acetylation of GlcN-1-P to GlcNAc-1-P, and for the uridyl transfer from UTP to GlcNAc-1-P, to produce UDP-GlcNAc and pyrophosphate. The polypeptide is Bifunctional protein GlmU (Methanococcus maripaludis (strain C7 / ATCC BAA-1331)).